We begin with the raw amino-acid sequence, 1038 residues long: Rap guanine nucleotide exchange factor 1 (1038 aa).

10–140 (RLSPLHTFSD…DILTDETPSD (131 aa)) contributes to the a nucleoside 3',5'-cyclic phosphate binding site. Positions 234–316 (TDNHQVIRDI…KTNSYYRWVQ (83 aa)) constitute a DEP domain. 375–492 (ALSHLSTMVK…VRLKDYGEDV (118 aa)) contacts a nucleoside 3',5'-cyclic phosphate. An N-terminal Ras-GEF domain is found at 516 to 654 (CGYSVMAGKA…DILTRIGSIR (139 aa)). In terms of domain architecture, Ras-GEF spans 795-1028 (DSQELAHQLF…MQLSYEIEPK (234 aa)).

In terms of assembly, interacts (via C-terminus) with drn-1. In terms of tissue distribution, expressed specifically in neurons including the nerve ring, ventral and dorsal nerve cord motor neurons and tail ganglia.

In terms of biological role, guanine nucleotide-releasing protein. Together with GTPase drn-1, may regulate acetylcholine release at the neuromuscular junctions probably downstream of G-protein gsa-1 and adenylate cyclase acy-1. This is Rap guanine nucleotide exchange factor 1 (epac-1) from Caenorhabditis elegans.